The chain runs to 132 residues: MAMTDPLGDMLTRIRNGAARRKSSVSTPASKLRARVLDVLQAEGYIRGYSEVEFGNGKAELNIELKYYEGASVIREIARVSKPGRRVYVSVKSIPQVANGLGITILSTPKGVMADHQAREQNVGGEVLCSIF.

This sequence belongs to the universal ribosomal protein uS8 family. As to quaternary structure, part of the 30S ribosomal subunit. Contacts proteins S5 and S12.

One of the primary rRNA binding proteins, it binds directly to 16S rRNA central domain where it helps coordinate assembly of the platform of the 30S subunit. This Rhizobium meliloti (strain 1021) (Ensifer meliloti) protein is Small ribosomal subunit protein uS8.